The primary structure comprises 554 residues: uncharacterized protein (554 aa).

Residues D327 and N328 each contribute to the Ca(2+) site.

This sequence belongs to the sulfatase family. Ca(2+) serves as cofactor.

The protein resides in the cytoplasm. It is found in the nucleus. This is an uncharacterized protein from Schizosaccharomyces pombe (strain 972 / ATCC 24843) (Fission yeast).